A 416-amino-acid chain; its full sequence is Doublesex- and mab-3-related transcription factor A2 (416 aa).

Residues 25–72 constitute a DNA-binding region (DM); that stretch reads CARCRNHGVVSALKGHKRYCRWKDCMCAKCTLIAERQRVMAAQVALRR. Residues 131–154 are compositionally biased toward polar residues; it reads FSKGQLSGPTTPQQAAGKSASAES. The segment at 131 to 226 is disordered; that stretch reads FSKGQLSGPT…PSPSSAASRH (96 aa). The span at 197-207 shows a compositional bias: low complexity; sequence GSVSSIGSDSG. Residues 227 to 262 form the DMA domain; the sequence is MNAIDILTRVFPSHKRSILELVLQGCGKDVVQAIEQ.

Belongs to the DMRT family.

It is found in the nucleus. Its function is as follows. May be involved in sexual development. The sequence is that of Doublesex- and mab-3-related transcription factor A2 (dmrta2) from Takifugu rubripes (Japanese pufferfish).